A 683-amino-acid polypeptide reads, in one-letter code: Protein kinase C eta type (683 aa).

Positions 1–118 (MSSGTMKFNG…LRTTGASDTF (118 aa)) constitute a C2 domain. Residues serine 28 and serine 32 each carry the phosphoserine; by autocatalysis modification. 2 Phorbol-ester/DAG-type zinc fingers span residues 171–222 (GHKF…VTAC) and 245–295 (PHKF…APNC). Serine 317 carries the phosphoserine modification. A disordered region spans residues 320–342 (SKLVSRSTLRRQGKESSKEGNGI). Residues 355–614 (FEFIRVLGKG…EHAILRHPFF (260 aa)) enclose the Protein kinase domain. ATP contacts are provided by residues 361 to 369 (LGKGSFGKV) and lysine 384. Aspartate 479 functions as the Proton acceptor in the catalytic mechanism. Threonine 513 is modified (phosphothreonine; by PDPK1). The region spanning 615-683 (KEIDWAQLNH…FSYVSPELQP (69 aa)) is the AGC-kinase C-terminal domain. Threonine 656 bears the Phosphothreonine mark. Serine 675 bears the Phosphoserine mark.

It belongs to the protein kinase superfamily. AGC Ser/Thr protein kinase family. PKC subfamily. In terms of assembly, interacts with FYN. Interacts with RALA. Interacts with DGKQ. Interacts with PRKCH upstream open reading frame 2; the interaction leads to inhibition of kinase activity. As to expression, most abundant in lung, less in heart and skin.

Its subcellular location is the cytoplasm. The catalysed reaction is L-seryl-[protein] + ATP = O-phospho-L-seryl-[protein] + ADP + H(+). The enzyme catalyses L-threonyl-[protein] + ATP = O-phospho-L-threonyl-[protein] + ADP + H(+). With respect to regulation, novel PKCs (PRKCD, PRKCE, PRKCH and PRKCQ) are calcium-insensitive, but activated by diacylglycerol (DAG) and phosphatidylserine. Three specific sites; Thr-513 (activation loop of the kinase domain), Thr-656 (turn motif) and Ser-675 (hydrophobic region), need to be phosphorylated for its full activation. Inhibited by PRKCH upstream open reading frame 2. In terms of biological role, calcium-independent, phospholipid- and diacylglycerol (DAG)-dependent serine/threonine-protein kinase that is involved in the regulation of cell differentiation in keratinocytes and pre-B cell receptor, mediates regulation of epithelial tight junction integrity and foam cell formation, and is required for glioblastoma proliferation and apoptosis prevention in MCF-7 cells. In keratinocytes, binds and activates the tyrosine kinase FYN, which in turn blocks epidermal growth factor receptor (EGFR) signaling and leads to keratinocyte growth arrest and differentiation. Associates with the cyclin CCNE1-CDK2-CDKN1B complex and inhibits CDK2 kinase activity, leading to RB1 dephosphorylation and thereby G1 arrest in keratinocytes. In association with RALA activates actin depolymerization, which is necessary for keratinocyte differentiation. In the pre-B cell receptor signaling, functions downstream of BLNK by up-regulating IRF4, which in turn activates L chain gene rearrangement. Regulates epithelial tight junctions (TJs) by phosphorylating occludin (OCLN) on threonine residues, which is necessary for the assembly and maintenance of TJs. In association with PLD2 and via TLR4 signaling, is involved in lipopolysaccharide (LPS)-induced RGS2 down-regulation and foam cell formation. Upon PMA stimulation, mediates glioblastoma cell proliferation by activating the mTOR pathway, the PI3K/AKT pathway and the ERK1-dependent phosphorylation of ELK1. Involved in the protection of glioblastoma cells from irradiation-induced apoptosis by preventing caspase-9 activation. In camptothecin-treated MCF-7 cells, regulates NF-kappa-B upstream signaling by activating IKBKB, and confers protection against DNA damage-induced apoptosis. Promotes oncogenic functions of ATF2 in the nucleus while blocking its apoptotic function at mitochondria. Phosphorylates ATF2 which promotes its nuclear retention and transcriptional activity and negatively regulates its mitochondrial localization. The protein is Protein kinase C eta type (PRKCH) of Homo sapiens (Human).